Consider the following 339-residue polypeptide: MKFVDEAFVRVEAGNGGHGCLSFRREKFIPRGGPDGGDGGDGGSVYFVADKSVNTLVEFRYQRLLRAQNGQPGMGRLRSGKKGEDLIVPVPLGTTVYDKETSELIGDLIEAGDKLCVARGGRHGLGNTHFKSSTNRAPRRTTSGEEGEARELKLELKLLADVGLLGLPNAGKSTFIHAVSKATPKIADYPFTTLYPHLGVVRVEEYRSFVIADIPGLIEGASEGAGLGVQFLKHLERTQLLLHIVDIAPLDGSDPVQSIQAIISELEQFSQNLSQKPRWLVFNKIDLLPPDVAQARCQEIINRLNWKGPVYKISAIKRQGTELLCYDLMSFLETNQRSI.

The region spanning 1-159 (MKFVDEAFVR…RELKLELKLL (159 aa)) is the Obg domain. Positions 127 to 147 (NTHFKSSTNRAPRRTTSGEEG) are disordered. Positions 160–333 (ADVGLLGLPN…LCYDLMSFLE (174 aa)) constitute an OBG-type G domain. Residues 166–173 (GLPNAGKS), 191–195 (FTTLY), 213–216 (DIPG), 283–286 (NKID), and 314–316 (SAI) each bind GTP. Residues Ser173 and Thr193 each coordinate Mg(2+).

This sequence belongs to the TRAFAC class OBG-HflX-like GTPase superfamily. OBG GTPase family. In terms of assembly, monomer. The cofactor is Mg(2+).

It is found in the cytoplasm. An essential GTPase which binds GTP, GDP and possibly (p)ppGpp with moderate affinity, with high nucleotide exchange rates and a fairly low GTP hydrolysis rate. Plays a role in control of the cell cycle, stress response, ribosome biogenesis and in those bacteria that undergo differentiation, in morphogenesis control. The protein is GTPase Obg of Coxiella burnetii (strain CbuG_Q212) (Coxiella burnetii (strain Q212)).